The chain runs to 596 residues: Structural protein precursor VP8 (596 aa).

The protein resides in the virion. In terms of biological role, 120 subunits of the putative clamp protein VP8b appear to stabilize the capsid shell. The protein is Structural protein precursor VP8 of Oryza latifolia (Indian wild rice).